The following is a 183-amino-acid chain: Archaemetzincin (183 aa).

His-131 contacts Zn(2+). Residue Glu-132 is the Proton acceptor of the active site. Zn(2+)-binding residues include His-135, His-141, Cys-142, Cys-147, Cys-166, and Cys-169.

The protein belongs to the peptidase M54 family. As to quaternary structure, monomer. Zn(2+) is required as a cofactor.

Functionally, probable zinc metalloprotease whose natural substrate is unknown. The protein is Archaemetzincin of Saccharolobus islandicus (strain L.S.2.15 / Lassen #1) (Sulfolobus islandicus).